The primary structure comprises 143 residues: Large ribosomal subunit protein uL11 (143 aa).

This sequence belongs to the universal ribosomal protein uL11 family. In terms of assembly, part of the ribosomal stalk of the 50S ribosomal subunit. Interacts with L10 and the large rRNA to form the base of the stalk. L10 forms an elongated spine to which L12 dimers bind in a sequential fashion forming a multimeric L10(L12)X complex. One or more lysine residues are methylated.

Functionally, forms part of the ribosomal stalk which helps the ribosome interact with GTP-bound translation factors. This is Large ribosomal subunit protein uL11 from Erythrobacter litoralis (strain HTCC2594).